The chain runs to 154 residues: MSANFTDKNGRQSKGVLLLRTLAMPSDTNANGDIFGGWIMSQMDMGGAILAKEIAHGRVVTVAVESMNFIKPISVGDVVCCYGQCLKVGRSSIKIKVEVWVKKVASEPIGERYCVTDAVFTFVAVDNNGRSRTIPRENNQELEKALALISEQPL.

The HotDog ACOT-type domain maps to serine 13–asparagine 128.

Belongs to the acyl coenzyme A hydrolase family.

This is an uncharacterized protein from Haemophilus influenzae (strain ATCC 51907 / DSM 11121 / KW20 / Rd).